The primary structure comprises 331 residues: UPF0194 membrane protein Ent638_1286 (331 aa).

Residues 1-16 form the signal peptide; the sequence is MKKPVVVILAVVVLLA. Residues 107 to 208 are a coiled coil; the sequence is EEVAQAEAAV…LDLHDTTLIA (102 aa).

This sequence belongs to the UPF0194 family.

Its subcellular location is the periplasm. In Enterobacter sp. (strain 638), this protein is UPF0194 membrane protein Ent638_1286.